The primary structure comprises 95 residues: Aspartyl/glutamyl-tRNA(Asn/Gln) amidotransferase subunit C (95 aa).

This sequence belongs to the GatC family. Heterotrimer of A, B and C subunits.

It catalyses the reaction L-glutamyl-tRNA(Gln) + L-glutamine + ATP + H2O = L-glutaminyl-tRNA(Gln) + L-glutamate + ADP + phosphate + H(+). It carries out the reaction L-aspartyl-tRNA(Asn) + L-glutamine + ATP + H2O = L-asparaginyl-tRNA(Asn) + L-glutamate + ADP + phosphate + 2 H(+). In terms of biological role, allows the formation of correctly charged Asn-tRNA(Asn) or Gln-tRNA(Gln) through the transamidation of misacylated Asp-tRNA(Asn) or Glu-tRNA(Gln) in organisms which lack either or both of asparaginyl-tRNA or glutaminyl-tRNA synthetases. The reaction takes place in the presence of glutamine and ATP through an activated phospho-Asp-tRNA(Asn) or phospho-Glu-tRNA(Gln). The polypeptide is Aspartyl/glutamyl-tRNA(Asn/Gln) amidotransferase subunit C (Campylobacter fetus subsp. fetus (strain 82-40)).